We begin with the raw amino-acid sequence, 207 residues long: Large ribosomal subunit protein bL25 (207 aa).

It belongs to the bacterial ribosomal protein bL25 family. CTC subfamily. Part of the 50S ribosomal subunit; part of the 5S rRNA/L5/L18/L25 subcomplex. Contacts the 5S rRNA. Binds to the 5S rRNA independently of L5 and L18.

Functionally, this is one of the proteins that binds to the 5S RNA in the ribosome where it forms part of the central protuberance. This chain is Large ribosomal subunit protein bL25, found in Orientia tsutsugamushi (strain Ikeda) (Rickettsia tsutsugamushi).